Consider the following 193-residue polypeptide: 7-methyl-GTP pyrophosphatase (193 aa).

D70 serves as the catalytic Proton acceptor.

This sequence belongs to the Maf family. YceF subfamily. It depends on a divalent metal cation as a cofactor.

Its subcellular location is the cytoplasm. The enzyme catalyses N(7)-methyl-GTP + H2O = N(7)-methyl-GMP + diphosphate + H(+). Functionally, nucleoside triphosphate pyrophosphatase that hydrolyzes 7-methyl-GTP (m(7)GTP). May have a dual role in cell division arrest and in preventing the incorporation of modified nucleotides into cellular nucleic acids. This chain is 7-methyl-GTP pyrophosphatase, found in Vibrio cholerae serotype O1 (strain ATCC 39315 / El Tor Inaba N16961).